Here is a 56-residue protein sequence, read N- to C-terminus: Large ribosomal subunit protein bL33 (56 aa).

Belongs to the bacterial ribosomal protein bL33 family.

In Actinobacillus pleuropneumoniae serotype 5b (strain L20), this protein is Large ribosomal subunit protein bL33.